Consider the following 404-residue polypeptide: Immediate early response gene 5-like protein (404 aa).

3 disordered regions span residues alanine 86–alanine 107, alanine 160–serine 231, and glutamine 308–glycine 327. A compositionally biased stretch (pro residues) spans proline 177 to proline 194. Positions alanine 195 to serine 231 are enriched in low complexity. Positions glutamine 308–alanine 318 are enriched in acidic residues.

This sequence belongs to the IER family.

The chain is Immediate early response gene 5-like protein (IER5L) from Homo sapiens (Human).